Here is a 604-residue protein sequence, read N- to C-terminus: Prostaglandin G/H synthase 2 (604 aa).

A signal peptide spans 1–17; the sequence is MLARALLLCAVLALSHT. Residues 18 to 55 enclose the EGF-like domain; the sequence is ANPCCSHPCQNRGVCMSVGFDQYKCDCTRTGFYGENCS. Cystine bridges form between cysteine 21-cysteine 32, cysteine 22-cysteine 145, cysteine 26-cysteine 42, and cysteine 44-cysteine 54. N-linked (GlcNAc...) asparagine glycosylation is present at asparagine 53. A substrate-binding site is contributed by arginine 106. Asparagine 130 carries an N-linked (GlcNAc...) asparagine glycan. Residue histidine 193 is the Proton acceptor of the active site. Tyrosine 341 provides a ligand contact to substrate. Tyrosine 371 acts as the For cyclooxygenase activity in catalysis. Histidine 374 provides a ligand contact to heme b. N-linked (GlcNAc...) asparagine glycosylation occurs at asparagine 396. Cysteine 526 is modified (S-nitrosocysteine). Cysteine 555 and cysteine 561 are disulfide-bonded. At serine 565 the chain carries O-acetylserine. The N-linked (GlcNAc...) asparagine glycan is linked to asparagine 580.

It belongs to the prostaglandin G/H synthase family. Homodimer. The cofactor is heme b. S-nitrosylation by NOS2 (iNOS) activates enzyme activity. S-nitrosylation may take place on different Cys residues in addition to Cys-526. In terms of processing, acetylated at Ser-565 by SPHK1. During neuroinflammation, acetylation by SPHK1 promotes neuronal secretion of specialized preresolving mediators (SPMs), especially 15-R-lipoxin A4, which results in an increase of phagocytic microglia.

It localises to the microsome membrane. Its subcellular location is the endoplasmic reticulum membrane. The protein localises to the nucleus inner membrane. The protein resides in the nucleus outer membrane. It catalyses the reaction (5Z,8Z,11Z,14Z)-eicosatetraenoate + AH2 + 2 O2 = prostaglandin H2 + A + H2O. It carries out the reaction (5Z,8Z,11Z,14Z)-eicosatetraenoate + 2 O2 = prostaglandin G2. The catalysed reaction is prostaglandin G2 + AH2 = prostaglandin H2 + A + H2O. The enzyme catalyses (5Z,8Z,11Z,14Z,17Z)-eicosapentaenoate + 2 O2 = prostaglandin G3. It catalyses the reaction prostaglandin G3 + AH2 = prostaglandin H3 + A + H2O. It carries out the reaction (8Z,11Z,14Z)-eicosatrienoate + 2 O2 = prostaglandin G1. The catalysed reaction is prostaglandin G1 + AH2 = prostaglandin H1 + A + H2O. The enzyme catalyses 2-(5Z,8Z,11Z,14Z)-eicosatetraenoyl-sn-glycero-3-phosphoethanolamine + 2 O2 = 2-(prostaglandin G2)-sn-glycero-3-phosphoethanolamine. It catalyses the reaction 2-(prostaglandin G2)-sn-glycero-3-phosphoethanolamine + AH2 = 2-(prostaglandin H2)-sn-glycero-3-phosphoethanolamine + A + H2O. It carries out the reaction 2-(5Z,8Z,11Z,14Z)-eicosatetraenoyl-sn-glycero-3-phosphocholine + 2 O2 = 2-(prostaglandin G2)-sn-glycero-3-phosphocholine. The catalysed reaction is 2-(prostaglandin G2)-sn-glycero-3-phosphocholine + AH2 = 2-(prostaglandin H2)-sn-glycero-3-phosphocholine + A + H2O. The enzyme catalyses (15S)-hydroperoxy-(5Z,8Z,11Z,13E)-eicosatetraenoate + AH2 = (15S)-hydroxy-(5Z,8Z,11Z,13E)-eicosatetraenoate + A + H2O. It catalyses the reaction 2-(5Z,8Z,11Z,14Z)-eicosatetraenoyl-sn-glycero-3-phosphocholine + AH2 + O2 = 2-[(15S)-hydroxy-(5Z,8Z,11Z,13E)-eicosatetraenoyl]-sn-glycero-3-phosphocholine + A + H2O. It carries out the reaction 2-(5Z,8Z,11Z,14Z)-eicosatetraenoyl-sn-glycero-3-phosphocholine + AH2 + O2 = 2-[(15R)-hydroxy-(5Z,8Z,11Z,13E)-eicosatetraenoyl]-sn-glycero-3-phosphocholine + A + H2O. The catalysed reaction is 2-(5Z,8Z,11Z,14Z)-eicosatetraenoyl-sn-glycero-3-phosphocholine + AH2 + O2 = 2-[(11R)-hydroxy-(5Z,8Z,12E,14Z)-eicosatetraenoyl]-sn-glycero-3-phosphocholine + A + H2O. The enzyme catalyses (9Z,12Z)-octadecadienoate + AH2 + O2 = 9-hydroxy-(10E,12Z)-octadecadienoate + A + H2O. It catalyses the reaction (9Z,12Z)-octadecadienoate + AH2 + O2 = 13-hydroxy-(9Z,11E)-octadecadienoate + A + H2O. It carries out the reaction (5Z,8Z,11Z,14Z)-eicosatetraenoate + AH2 + O2 = (15R)-hydroxy-(5Z,8Z,11Z,13E)-eicosatetraenoate + A + H2O. The catalysed reaction is (5Z,8Z,11Z,14Z)-eicosatetraenoate + AH2 + O2 = (11R)-hydroxy-(5Z,8Z,12E,14Z)-eicosatetraenoate + A + H2O. The enzyme catalyses (5Z,8Z,11Z,14Z,17Z)-eicosapentaenoate + AH2 + O2 = (11R)-hydroxy-(5Z,8Z,12E,14Z,17Z)-eicosapentaenoate + A + H2O. It catalyses the reaction (5Z,8Z,11Z,14Z,17Z)-eicosapentaenoate + AH2 + O2 = (18S)-hydroxy-(5Z,8Z,11Z,14Z,16E)-eicosapentaenoate + A + H2O. It carries out the reaction (5Z,8Z,11Z,14Z,17Z)-eicosapentaenoate + AH2 + O2 = (18R)-hydroxy-(5Z,8Z,11Z,14Z,16E)-eicosapentaenoate + A + H2O. The catalysed reaction is (5Z,8Z,11Z,14Z,17Z)-eicosapentaenoate + AH2 + O2 = (15R)-hydroxy-(5Z,8Z,11Z,13E,17Z)-eicosapentaenoate + A + H2O. The enzyme catalyses (5Z,8Z,11Z,14Z,17Z)-eicosapentaenoate + AH2 + O2 = (15S)-hydroxy-(5Z,8Z,11Z,13E,17Z)-eicosapentaenoate + A + H2O. It catalyses the reaction (7Z,10Z,13Z,16Z,19Z)-docosapentaenoate + AH2 + O2 = 13R-hydroxy-(7Z,10Z,14E,16Z,19Z)-docosapentaenoate + A + H2O. It carries out the reaction (4Z,7Z,10Z,13Z,16Z,19Z)-docosahexaenoate + AH2 + O2 = 13-hydroxy-(4Z,7Z,10Z,14E,16Z,19Z)-docosahexaenoate + A + H2O. The catalysed reaction is (5S)-hydroxy-(6E,8Z,11Z,14Z)-eicosatetraenoate + AH2 + O2 = (5S,15R)-dihydroxy-(6E,8Z,11Z,13E)-eicosatetraenoate + A + H2O. The enzyme catalyses (4Z,7Z,10Z,13Z,16Z,19Z)-docosahexaenoate + AH2 + O2 = 17R-hydroxy-(4Z,7Z,10Z,13Z,15E,19Z)-docosahexaenoate + A + H2O. It catalyses the reaction (5S)-hydroxy-(6E,8Z,11Z,14Z)-eicosatetraenoate + AH2 + O2 = (5S,15S)-dihydroxy-(6E,8Z,11Z,13E)-eicosatetraenoate + A + H2O. It carries out the reaction (5S)-hydroxy-(6E,8Z,11Z,14Z)-eicosatetraenoate + AH2 + O2 = (5S,11R)-dihydroxy-(6E,8Z,12E,14Z)-eicosatetraenoate + A + H2O. The catalysed reaction is 2-(5Z,8Z,11Z,14Z-eicosatetraenoyl)-glycerol + 2 O2 = 2-glyceryl-prostaglandin G2. The enzyme catalyses 2-glyceryl-prostaglandin G2 + AH2 = 2-glyceryl-prostaglandin H2 + A + H2O. It catalyses the reaction (5Z,8Z,11Z,14Z)-eicosatetraenoate + O2 = (15R)-hydroperoxy-(5Z,8Z,11Z,13E)-eicosatetraenoate. It carries out the reaction (5Z,8Z,11Z,14Z)-eicosatetraenoate + O2 = 11R-hydroperoxy-(5Z,8Z,12E,14Z)-eicosatetraenoate. The catalysed reaction is (9Z,12Z)-octadecadienoate + AH2 + O2 = (9R)-hydroxy-(10E,12Z)-octadecadienoate + A + H2O. The enzyme catalyses (9Z,12Z)-octadecadienoate + AH2 + O2 = (9S)-hydroxy-(10E,12Z)-octadecadienoate + A + H2O. It catalyses the reaction (9Z,12Z)-octadecadienoate + AH2 + O2 = (13S)-hydroxy-(9Z,11E)-octadecadienoate + A + H2O. It carries out the reaction (9Z,12Z)-octadecadienoate + AH2 + O2 = (13R)-hydroxy-(9Z,11E)-octadecadienoate + A + H2O. It functions in the pathway lipid metabolism; prostaglandin biosynthesis. The cyclooxygenase activity is inhibited by nonsteroidal anti-inflammatory drugs (NSAIDs) including aspirin, ibuprofen, flurbiprofen, celecoxib, flufenamic, mefenamic and tolfenamic acids as well as by hydroperoxide scavenger erythrocyte glutathione peroxidase GPX1. Aspirin triggers enzyme acetylation turning off its ability to generate pro-inflammatory prostaglandins, but switches on its capacity to produce anti-inflammatory lipid mediators involved in inflammation resolution. Aspirin enhances lipoxygenase-type activity toward production of epimers with R stereochemistry such as 15R-HETE, 18R-HEPE, 15R-HEPE and 17R-HDHA. Atorvastatin, a cholesterol-lowering drug, triggers enzyme S-nitrosylation increasing production of 13-series resolvins (RvTs). Dual cyclooxygenase and peroxidase in the biosynthesis pathway of prostanoids, a class of C20 oxylipins mainly derived from arachidonate ((5Z,8Z,11Z,14Z)-eicosatetraenoate, AA, C20:4(n-6)), with a particular role in the inflammatory response. The cyclooxygenase activity oxygenates AA to the hydroperoxy endoperoxide prostaglandin G2 (PGG2), and the peroxidase activity reduces PGG2 to the hydroxy endoperoxide prostaglandin H2 (PGH2), the precursor of all 2-series prostaglandins and thromboxanes. This complex transformation is initiated by abstraction of hydrogen at carbon 13 (with S-stereochemistry), followed by insertion of molecular O2 to form the endoperoxide bridge between carbon 9 and 11 that defines prostaglandins. The insertion of a second molecule of O2 (bis-oxygenase activity) yields a hydroperoxy group in PGG2 that is then reduced to PGH2 by two electrons. Similarly catalyzes successive cyclooxygenation and peroxidation of dihomo-gamma-linoleate (DGLA, C20:3(n-6)) and eicosapentaenoate (EPA, C20:5(n-3)) to corresponding PGH1 and PGH3, the precursors of 1- and 3-series prostaglandins. In an alternative pathway of prostanoid biosynthesis, converts 2-arachidonoyl lysophopholipids to prostanoid lysophopholipids, which are then hydrolyzed by intracellular phospholipases to release free prostanoids. Metabolizes 2-arachidonoyl glycerol yielding the glyceryl ester of PGH2, a process that can contribute to pain response. Generates lipid mediators from n-3 and n-6 polyunsaturated fatty acids (PUFAs) via a lipoxygenase-type mechanism. Oxygenates PUFAs to hydroperoxy compounds and then reduces them to corresponding alcohols. Plays a role in the generation of resolution phase interaction products (resolvins) during both sterile and infectious inflammation. Metabolizes docosahexaenoate (DHA, C22:6(n-3)) to 17R-HDHA, a precursor of the D-series resolvins (RvDs). As a component of the biosynthetic pathway of E-series resolvins (RvEs), converts eicosapentaenoate (EPA, C20:5(n-3)) primarily to 18S-HEPE that is further metabolized by ALOX5 and LTA4H to generate 18S-RvE1 and 18S-RvE2. In vascular endothelial cells, converts docosapentaenoate (DPA, C22:5(n-3)) to 13R-HDPA, a precursor for 13-series resolvins (RvTs) shown to activate macrophage phagocytosis during bacterial infection. In activated leukocytes, contributes to oxygenation of hydroxyeicosatetraenoates (HETE) to diHETES (5,15-diHETE and 5,11-diHETE). Can also use linoleate (LA, (9Z,12Z)-octadecadienoate, C18:2(n-6)) as substrate and produce hydroxyoctadecadienoates (HODEs) in a regio- and stereospecific manner, being (9R)-HODE ((9R)-hydroxy-(10E,12Z)-octadecadienoate) and (13S)-HODE ((13S)-hydroxy-(9Z,11E)-octadecadienoate) its major products. During neuroinflammation, plays a role in neuronal secretion of specialized preresolving mediators (SPMs) 15R-lipoxin A4 that regulates phagocytic microglia. This is Prostaglandin G/H synthase 2 from Homo sapiens (Human).